Reading from the N-terminus, the 942-residue chain is Inter alpha-trypsin inhibitor, heavy chain 4 (942 aa).

Residues 1 to 28 (MKSPAPAHMWNLVLFLPSLLAVLPTTTA) form the signal peptide. A VIT domain is found at 29-148 (EKNGIDIYSL…KITFELIYQE (120 aa)). An N-linked (GlcNAc...) asparagine glycan is attached at N81. One can recognise a VWFA domain in the interval 274 to 457 (NVIFVIDKSG…LQLQDFYHEV (184 aa)). N-linked (GlcNAc...) asparagine glycans are attached at residues N517 and N577. Positions 552-586 (TIQQQLEQRISASGAELEALEAQVLNLSLKYNFVT) form a coiled coil. Disordered stretches follow at residues 658-698 (RQYI…SDFS) and 726-745 (EKSKESTIPEESPNPDHPQV). A compositionally biased stretch (pro residues) spans 663 to 690 (PGFPGPPGPPGFPAPPGPPGFPAPPGPP). O-linked (GalNAc...) threonine glycosylation occurs at T732. C761 and C937 are oxidised to a cystine. N874 is a glycosylation site (N-linked (GlcNAc...) asparagine).

Belongs to the ITIH family. In terms of assembly, interacts (via C-terminus) with DNAJC1 (via SANT 2 domain). In terms of processing, may be O-glycosylated. N-glycosylated. Highly expressed in liver. Weak expression in lung and heart.

The protein localises to the secreted. Its function is as follows. Type II acute-phase protein (APP) involved in inflammatory responses to trauma. May also play a role in liver development or regeneration. The protein is Inter alpha-trypsin inhibitor, heavy chain 4 (Itih4) of Mus musculus (Mouse).